The sequence spans 393 residues: Dual-specificity RNA methyltransferase RlmN (393 aa).

The Proton acceptor role is filled by Glu114. The Radical SAM core domain occupies 120-359 (EDDRATLCVS…VIVRKTRGDD (240 aa)). A disulfide bridge connects residues Cys127 and Cys364. Residues Cys134, Cys138, and Cys141 each coordinate [4Fe-4S] cluster. Residues 188–189 (GE), Ser220, 242–244 (SLH), and Asn321 contribute to the S-adenosyl-L-methionine site. Cys364 (S-methylcysteine intermediate) is an active-site residue.

This sequence belongs to the radical SAM superfamily. RlmN family. [4Fe-4S] cluster is required as a cofactor.

It is found in the cytoplasm. The enzyme catalyses adenosine(2503) in 23S rRNA + 2 reduced [2Fe-2S]-[ferredoxin] + 2 S-adenosyl-L-methionine = 2-methyladenosine(2503) in 23S rRNA + 5'-deoxyadenosine + L-methionine + 2 oxidized [2Fe-2S]-[ferredoxin] + S-adenosyl-L-homocysteine. It carries out the reaction adenosine(37) in tRNA + 2 reduced [2Fe-2S]-[ferredoxin] + 2 S-adenosyl-L-methionine = 2-methyladenosine(37) in tRNA + 5'-deoxyadenosine + L-methionine + 2 oxidized [2Fe-2S]-[ferredoxin] + S-adenosyl-L-homocysteine. In terms of biological role, specifically methylates position 2 of adenine 2503 in 23S rRNA and position 2 of adenine 37 in tRNAs. m2A2503 modification seems to play a crucial role in the proofreading step occurring at the peptidyl transferase center and thus would serve to optimize ribosomal fidelity. The chain is Dual-specificity RNA methyltransferase RlmN from Actinobacillus pleuropneumoniae serotype 3 (strain JL03).